The following is a 747-amino-acid chain: MSDTASTATGHRKRDKPQLSCNACRKRKRVRCDRLHPCSNCASRGLGSTCTFAAISSPTNMPPSHGHSIPVQHRVESARPGPTNSMQTRINQLENLVIELMNQNNTPGMRTGLQNQGSDARSDARCQPTPLSSETEFEYPVAPSPSDHGSINTRLARPTYVSSSHWAAIFDSITELRNHFVQEDIEHGASTVLPSSTVPKPQILYGAWTSETPHAIISSLPPRTTVDRLISRYFNVLDIAPGVVHSTQFLREYENFWMAPQDAPIMWVGLLFAMMCLSAQLQQASLPAHDSRPSSSRASQQDSIAIYREKTIQCLQLGHYTMGGTHALETLILYFLGECFNLKDMEIGIWILSGTILQIAIHMGYHRDAKNFPSITPFAGEMRRRVWAMIVQLDFSISAQLGLPTLIKASQTDTAEPRNLYDTDFDEDSSALPESRPETEVTPTLYVLAKLRLISIGLRVTNVASESRTRSYSDVLELDRQLREARDALPSSLKWIDLGTSLNVSSQTILQRIWLEVTIQQLTIVLHKKFLGVSGLQKDFKTSRAACLNAAVKILELQRLVDDETQPDGLLYQSRWRVSSAFSNDFLLATSILCYCLQNRPEGTISNFDESVSVGLDQIRALLETSKSIWSRQCAESKEAHKAVAALRYVLGHSGADVDSGYTVAERQPLPMPTAALSYFPDLTSDYNFAGFDFGSSDTTRWTAFASDELGEENWSRGAGFQQMDMSLKLEAFDRVVPNSIPSRCLS.

The zn(2)-C6 fungal-type DNA-binding region spans 21-50 (CNACRKRKRVRCDRLHPCSNCASRGLGSTC). Disordered regions lie at residues 112-150 (GLQN…DHGS) and 414-436 (TAEP…PESR).

It is found in the nucleus. In terms of biological role, transcription factor that regulates the expression of the gene cluster that mediates the biosynthesis of the trans-fused decalin-containing tetramic acid phomasetin. The sequence is that of Transcription factor phm2 from Pyrenochaetopsis sp.